The following is a 343-amino-acid chain: Methionine import ATP-binding protein MetN 1 (343 aa).

Residues 2–241 (IKLTHISKVF…PKTPLAQQFI (240 aa)) form the ABC transporter domain. 38–45 (GASGAGKS) contacts ATP.

This sequence belongs to the ABC transporter superfamily. Methionine importer (TC 3.A.1.24) family. The complex is composed of two ATP-binding proteins (MetN), two transmembrane proteins (MetI) and a solute-binding protein (MetQ).

Its subcellular location is the cell inner membrane. The enzyme catalyses L-methionine(out) + ATP + H2O = L-methionine(in) + ADP + phosphate + H(+). It carries out the reaction D-methionine(out) + ATP + H2O = D-methionine(in) + ADP + phosphate + H(+). Part of the ABC transporter complex MetNIQ involved in methionine import. Responsible for energy coupling to the transport system. The polypeptide is Methionine import ATP-binding protein MetN 1 (Yersinia pestis bv. Antiqua (strain Antiqua)).